The chain runs to 116 residues: Phosphoribosyl-AMP cyclohydrolase (116 aa).

Position 85 (D85) interacts with Mg(2+). Position 86 (C86) interacts with Zn(2+). Mg(2+) is bound by residues D87 and D89. Zn(2+) contacts are provided by C102 and C109.

This sequence belongs to the PRA-CH family. In terms of assembly, homodimer. Requires Mg(2+) as cofactor. Zn(2+) is required as a cofactor.

The protein resides in the cytoplasm. It catalyses the reaction 1-(5-phospho-beta-D-ribosyl)-5'-AMP + H2O = 1-(5-phospho-beta-D-ribosyl)-5-[(5-phospho-beta-D-ribosylamino)methylideneamino]imidazole-4-carboxamide. It participates in amino-acid biosynthesis; L-histidine biosynthesis; L-histidine from 5-phospho-alpha-D-ribose 1-diphosphate: step 3/9. Its function is as follows. Catalyzes the hydrolysis of the adenine ring of phosphoribosyl-AMP. This Thermobifida fusca (strain YX) protein is Phosphoribosyl-AMP cyclohydrolase.